A 203-amino-acid chain; its full sequence is dTTP/UTP pyrophosphatase (203 aa).

The active-site Proton acceptor is D70.

The protein belongs to the Maf family. YhdE subfamily. Requires a divalent metal cation as cofactor.

It is found in the cytoplasm. It catalyses the reaction dTTP + H2O = dTMP + diphosphate + H(+). The enzyme catalyses UTP + H2O = UMP + diphosphate + H(+). In terms of biological role, nucleoside triphosphate pyrophosphatase that hydrolyzes dTTP and UTP. May have a dual role in cell division arrest and in preventing the incorporation of modified nucleotides into cellular nucleic acids. The polypeptide is dTTP/UTP pyrophosphatase (maf-1) (Pseudomonas putida (strain ATCC 47054 / DSM 6125 / CFBP 8728 / NCIMB 11950 / KT2440)).